A 640-amino-acid chain; its full sequence is Kelch-like protein 17 (640 aa).

The tract at residues 1-50 (MQPRGERPAGRTQSPEHSSPGPGPEAPPPPQPPAPEAERARPRQARPAAP) is disordered. A compositionally biased stretch (pro residues) spans 21-35 (GPGPEAPPPPQPPAP). In terms of domain architecture, BTB spans 90–157 (CDIVLHVAAK…AYTAEIVVGE (68 aa)). In terms of domain architecture, BACK spans 192–294 (CLGIRGFADT…SRDFLLGHVD (103 aa)). An interaction with F-actin region spans residues 287-639 (DFLLGHVDAE…SPTLSVSSTS (353 aa)). Kelch repeat units follow at residues 341–387 (VLFA…AVGN), 388–434 (RLYA…ALHG), 436–481 (LYAA…TLDG), 482–528 (NLYA…VLEG), 530–575 (LYVA…AMDG), and 576–622 (WLYA…VLEL). The interval 638 to 640 (TSL) is interaction with PDZK1.

As to quaternary structure, interacts with F-actin; the interaction disrupts the F-actin structures and leads to marked changes of neuronal morphology. Component of a complex, composed of PDZK1, SYNGAP1, KLHL17 and NMDA receptors. Interacts directly with PDZK1 (via PDZ1 domain); the interaction is important for integrity of actin cytoskeleton structures in neurons. Interacts with DLG4 and SYNGAP1. Interacts (via kelch repeats) with GRIK2 (via C-terminus); the interaction targets GRIK2 for degradation via ubiquitin-proteasome pathway. Interacts with GRIK1. Interacts with (via BTB domain) CUL3; the interaction regulates surface GRIK2 expression.

The protein localises to the postsynaptic density. The protein resides in the synapse. Its pathway is protein modification; protein ubiquitination. Functionally, substrate-recognition component of some cullin-RING-based BCR (BTB-CUL3-RBX1) E3 ubiquitin-protein ligase complexes. The BCR(KLHL17) complex mediates the ubiquitination and subsequent degradation of GLUR6. May play a role in the actin-based neuronal function. In Mus musculus (Mouse), this protein is Kelch-like protein 17 (Klhl17).